We begin with the raw amino-acid sequence, 467 residues long: Ribulose bisphosphate carboxylase large chain (467 aa).

Lys5 is modified (N6,N6,N6-trimethyllysine). Substrate is bound by residues Asn114 and Thr164. Lys166 (proton acceptor) is an active-site residue. Residue Lys168 coordinates substrate. Lys192, Asp194, and Glu195 together coordinate Mg(2+). An N6-carboxylysine modification is found at Lys192. The Proton acceptor role is filled by His285. The substrate site is built by Arg286, His318, and Ser370.

Belongs to the RuBisCO large chain family. Type I subfamily. Heterohexadecamer of 8 large chains and 8 small chains; disulfide-linked. The disulfide link is formed within the large subunit homodimers. It depends on Mg(2+) as a cofactor. The disulfide bond which can form in the large chain dimeric partners within the hexadecamer appears to be associated with oxidative stress and protein turnover.

It localises to the plastid. The protein localises to the chloroplast. The catalysed reaction is 2 (2R)-3-phosphoglycerate + 2 H(+) = D-ribulose 1,5-bisphosphate + CO2 + H2O. It catalyses the reaction D-ribulose 1,5-bisphosphate + O2 = 2-phosphoglycolate + (2R)-3-phosphoglycerate + 2 H(+). Its function is as follows. RuBisCO catalyzes two reactions: the carboxylation of D-ribulose 1,5-bisphosphate, the primary event in carbon dioxide fixation, as well as the oxidative fragmentation of the pentose substrate in the photorespiration process. Both reactions occur simultaneously and in competition at the same active site. This is Ribulose bisphosphate carboxylase large chain from Scutellaria bolanderi (Sierra skullcap).